The following is a 447-amino-acid chain: MNAWEVNFDGLVGLTHHYAGLSFGNEASTRHRFQISNPRLAAKQGLLKMKNLADAGFPQAVIPPHERPFIPVLRQLGFSGSDEQVLEKVARQAPHWLSSVSSASPMWVANAATIAPSADTLDGKVHLTIANLNNKFHRSLEAPVTESLLKAIFDDEEKFSVHSALPQVALLGDEGAANHNRLGGHYGEPGMQLFVYGREEGNDTRPSRYPARQTREASEAVARLNQVNPQQVIFAQQNPDVIDQGVFHNDVIAVSNRQVLFCHQQAFARQVQLLANLRARVNGFMAIEVPATQVSVSDAVSTYLFNSQLLSRDDGSMMLVLPQECREHAGVWGYLNELLVADNPISELKVFDLRESMANGGGPACLRLRVVLTEEERRAVNPAVMMNDTLFNALNDWVDRYYRDRLTAADLADPQLLREGREALDVLSQLLNLGSVYPFQREGGGNG.

Substrate-binding positions include 19 to 28 (AGLSFGNEAS), Asn-110, and 137 to 138 (HR). Glu-174 is an active-site residue. Arg-212 is a binding site for substrate. His-248 is a catalytic residue. Substrate-binding residues include Asp-250 and Asn-359. Cys-365 (nucleophile) is an active-site residue.

This sequence belongs to the succinylarginine dihydrolase family. As to quaternary structure, homodimer.

The catalysed reaction is N(2)-succinyl-L-arginine + 2 H2O + 2 H(+) = N(2)-succinyl-L-ornithine + 2 NH4(+) + CO2. Its pathway is amino-acid degradation; L-arginine degradation via AST pathway; L-glutamate and succinate from L-arginine: step 2/5. Functionally, catalyzes the hydrolysis of N(2)-succinylarginine into N(2)-succinylornithine, ammonia and CO(2). In Escherichia coli (strain SMS-3-5 / SECEC), this protein is N-succinylarginine dihydrolase.